The chain runs to 496 residues: Alanine aminotransferase 1 (496 aa).

The residue at position 2 (A2) is an N-acetylalanine. The residue at position 22 (T22) is a Phosphothreonine. K314 bears the N6-(pyridoxal phosphate)lysine mark.

The protein belongs to the class-I pyridoxal-phosphate-dependent aminotransferase family. Alanine aminotransferase subfamily. Homodimer. The cofactor is pyridoxal 5'-phosphate. In terms of tissue distribution, liver, kidney, heart, and skeletal muscles. Expressed at moderate levels in the adipose tissue.

It localises to the cytoplasm. The enzyme catalyses L-alanine + 2-oxoglutarate = pyruvate + L-glutamate. The protein operates within amino-acid degradation; L-alanine degradation via transaminase pathway; pyruvate from L-alanine: step 1/1. In terms of biological role, catalyzes the reversible transamination between alanine and 2-oxoglutarate to form pyruvate and glutamate. Participates in cellular nitrogen metabolism and also in liver gluconeogenesis starting with precursors transported from skeletal muscles. This is Alanine aminotransferase 1 (GPT) from Homo sapiens (Human).